We begin with the raw amino-acid sequence, 31 residues long: Putative gene 37 protein (31 aa).

The sequence is that of Putative gene 37 protein (37) from Bacillus subtilis (Bacteriophage SP01).